Here is a 500-residue protein sequence, read N- to C-terminus: Cytochrome P450 726A27 (500 aa).

Residues 7–27 (IPSYPIIFSFFIFIFMLIKIW) form a helical; Signal-anchor for type II membrane protein membrane-spanning segment. Residue Cys440 coordinates heme.

It belongs to the cytochrome P450 family. The cofactor is heme. As to expression, expressed in mature seeds.

The protein resides in the membrane. The enzyme catalyses (-)-casbene + reduced [NADPH--hemoprotein reductase] + O2 = 4-hydroxycasbene + oxidized [NADPH--hemoprotein reductase] + H2O + H(+). It carries out the reaction 8-hydroxycasbene + reduced [NADPH--hemoprotein reductase] + O2 = 4,8-dihydroxycasbene + oxidized [NADPH--hemoprotein reductase] + H2O + H(+). It catalyses the reaction 4,8-dihydroxycasbene + reduced [NADPH--hemoprotein reductase] + O2 = 4,5,8-trihydroxycasbene + oxidized [NADPH--hemoprotein reductase] + H2O + H(+). Its pathway is secondary metabolite biosynthesis; terpenoid biosynthesis. Functionally, involved in the biosynthesis of macrocyclic lathyrane type diterpenoids (also called Euphorbia factors) natural products, including the cyclization route from casbene to jolkinol C, a precursor for ingenol mebutate that is used to treat actinic keratosis, a precancerous skin condition. Catalyzes the hydroxylation of (-)-casbene and 8-hydroxycasbene to produce 4-hydroxycasbene and 4,8-dihydroxycasbene, respectively. The polypeptide is Cytochrome P450 726A27 (Euphorbia lathyris (Caper spurge)).